A 119-amino-acid polypeptide reads, in one-letter code: MKIALIAHDKKKEEMIELAKDFEDKLSKHILVATGTTGLKIMQNTSLEVKRCKSGPLGGDQEIGAMVANHDVDMVIFLRDPLTAQPHEPDISALLRLCDVYKVPLATNTESAKLIMADI.

The MGS-like domain maps to 1–119 (MKIALIAHDK…ESAKLIMADI (119 aa)). Residues His8, Lys12, 34-37 (TGTT), and 54-55 (SG) contribute to the substrate site. Asp60 functions as the Proton donor/acceptor in the catalytic mechanism. Substrate is bound at residue His87.

Belongs to the methylglyoxal synthase family.

The catalysed reaction is dihydroxyacetone phosphate = methylglyoxal + phosphate. Its function is as follows. Catalyzes the formation of methylglyoxal from dihydroxyacetone phosphate. The polypeptide is Methylglyoxal synthase (Clostridium perfringens (strain 13 / Type A)).